Here is a 204-residue protein sequence, read N- to C-terminus: Putative copper-binding protein (204 aa).

Cu cation contacts are provided by cysteine 77, cysteine 81, and histidine 166.

The protein belongs to the SCO1/2 family.

In Stutzerimonas stutzeri (Pseudomonas stutzeri), this protein is Putative copper-binding protein (scoP).